The sequence spans 330 residues: Ribosomal RNA small subunit methyltransferase H (330 aa).

S-adenosyl-L-methionine contacts are provided by residues 40–42 (GGY), Asp-58, Phe-85, Asp-101, and Gln-108.

The protein belongs to the methyltransferase superfamily. RsmH family.

Its subcellular location is the cytoplasm. The enzyme catalyses cytidine(1402) in 16S rRNA + S-adenosyl-L-methionine = N(4)-methylcytidine(1402) in 16S rRNA + S-adenosyl-L-homocysteine + H(+). Its function is as follows. Specifically methylates the N4 position of cytidine in position 1402 (C1402) of 16S rRNA. The polypeptide is Ribosomal RNA small subunit methyltransferase H (Roseobacter denitrificans (strain ATCC 33942 / OCh 114) (Erythrobacter sp. (strain OCh 114))).